Here is a 335-residue protein sequence, read N- to C-terminus: Methylthioribose-1-phosphate isomerase (335 aa).

Substrate-binding positions include 47–49, Arg-81, and Gln-184; that span reads RGA. Asp-225 serves as the catalytic Proton donor. 235–236 is a substrate binding site; the sequence is NK.

This sequence belongs to the eIF-2B alpha/beta/delta subunits family. MtnA subfamily.

It catalyses the reaction 5-(methylsulfanyl)-alpha-D-ribose 1-phosphate = 5-(methylsulfanyl)-D-ribulose 1-phosphate. The protein operates within amino-acid biosynthesis; L-methionine biosynthesis via salvage pathway; L-methionine from S-methyl-5-thio-alpha-D-ribose 1-phosphate: step 1/6. In terms of biological role, catalyzes the interconversion of methylthioribose-1-phosphate (MTR-1-P) into methylthioribulose-1-phosphate (MTRu-1-P). This is Methylthioribose-1-phosphate isomerase from Synechococcus sp. (strain CC9902).